Here is a 629-residue protein sequence, read N- to C-terminus: MNQPIAAIGISDSTRPKTNVRLTISAEHLMDTDVFSKSDPICLVYEKTSGKKATTTEPVQVPTWQDSQWTERGRTEVVMNNLNPQFTKTFLLPYFFEETQLLRFEIYDADSPNVGQDLSPHDFLGRFECVLAQIVSYSTLKAHLGKAEGIGAQWRNKDKNTRTGSITIRAEEDEKCEKIQFDVCGEGLDKKDFFGKSDPYLNFKRKFDDGSAHLVHRTEVKQKTLDPRWATVQINTQTLCGKDGERPIIIECYDHDKWKKGEEPRGEAKFSRDDHIGTAHTTLNELLRGGAGDPVELLLTNEKKKAKKGDKYKCSGTLKIWNSKIIVEPTFLDFISGGTQLEFAVAVDFTASNGAPKNSSSLHYMSADRPNQYELALRSVLSICQHYNSSKTFEAFGFGAKLPNSVSVSAIFSLDLLRGTPEVVGISGVMSAYRHALQNVQLYGPTNFAPIIDTVAQKAQNMIHDSARYQILLIITDGIISDMHATIRSIINASGLPLSIIIIGVGNEDFEKMHELDSDDSLLQQDSRIAQRDIVQFVTIREFLNNGRGVYLDPDVVQENLAREVLFEVPGQLTGYMKQRGFQPRPVENPWTRNSPPPDYDPVLDGIGRRAQAPSPGFQMPVASAPPMY.

C2 domains follow at residues 1 to 144 (MNQP…KAHL) and 162 to 299 (RTGS…ELLL). Aspartate 33, aspartate 39, aspartate 108, aspartate 110, aspartate 122, aspartate 192, aspartate 198, aspartate 254, aspartate 256, and aspartate 274 together coordinate Ca(2+). The VWFA domain maps to 342-561 (EFAVAVDFTA…LDPDVVQENL (220 aa)). 2 disordered regions span residues 581–600 (GFQP…PPDY) and 607–629 (IGRR…PPMY).

It belongs to the copine family. Interacts with nicotinic acetylcholine receptor. The cofactor is Ca(2+).

The protein localises to the cell membrane. Functionally, exhibits calcium-dependent phospholipid binding properties. May function in membrane trafficking. Regulates synaptic levels of nicotinic acetylcholine receptor subunit lev-1 and unc-38 in the nerve cord. Involved in nicotinic acetylcholine receptor (nAChR)-mediated sensitivity to nicotine and levamisole. Affects directional sperm motility. This Caenorhabditis briggsae protein is Nicotinic receptor-associated protein 1.